We begin with the raw amino-acid sequence, 193 residues long: dCTP deaminase (193 aa).

DCTP contacts are provided by residues 110-115, D128, 136-138, Y171, K178, and Q182; these read RSSLAR and VLE. Catalysis depends on E138, which acts as the Proton donor/acceptor. Over residues 170–181 the composition is skewed to basic and acidic residues; sequence PYNRRQDAKYRD. The interval 170–193 is disordered; it reads PYNRRQDAKYRDQQGAVASRIDKD.

This sequence belongs to the dCTP deaminase family. In terms of assembly, homotrimer.

It carries out the reaction dCTP + H2O + H(+) = dUTP + NH4(+). It participates in pyrimidine metabolism; dUMP biosynthesis; dUMP from dCTP (dUTP route): step 1/2. In terms of biological role, catalyzes the deamination of dCTP to dUTP. This Enterobacter sp. (strain 638) protein is dCTP deaminase.